A 362-amino-acid polypeptide reads, in one-letter code: Chorismate synthase (362 aa).

Residue Arg-47 coordinates NADP(+). FMN-binding positions include 124 to 126, Gly-286, 301 to 305, and Arg-327; these read RSS and KPTAT.

The protein belongs to the chorismate synthase family. As to quaternary structure, homotetramer. FMNH2 serves as cofactor.

The enzyme catalyses 5-O-(1-carboxyvinyl)-3-phosphoshikimate = chorismate + phosphate. The protein operates within metabolic intermediate biosynthesis; chorismate biosynthesis; chorismate from D-erythrose 4-phosphate and phosphoenolpyruvate: step 7/7. In terms of biological role, catalyzes the anti-1,4-elimination of the C-3 phosphate and the C-6 proR hydrogen from 5-enolpyruvylshikimate-3-phosphate (EPSP) to yield chorismate, which is the branch point compound that serves as the starting substrate for the three terminal pathways of aromatic amino acid biosynthesis. This reaction introduces a second double bond into the aromatic ring system. This Nostoc punctiforme (strain ATCC 29133 / PCC 73102) protein is Chorismate synthase.